A 923-amino-acid polypeptide reads, in one-letter code: Protocadherin gamma-B5 (923 aa).

Positions 1-30 are cleaved as a signal peptide; sequence MGSGAGELGRAERLPVLFLFLLSLFCPALC. Cadherin domains follow at residues 31–133, 134–242, 243–343, 344–448, 449–558, and 566–671; these read EQIR…TPKF, TQNS…PPVF, NRDV…SPEV, TFHS…APVF, HQAS…APRV, and DGSA…LPDI. Residues 31 to 687 lie on the Extracellular side of the membrane; that stretch reads EQIRYRIPEE…SDPQAELQFY (657 aa). Residues asparagine 415 and asparagine 541 are each glycosylated (N-linked (GlcNAc...) asparagine). The chain crosses the membrane as a helical span at residues 688–708; the sequence is LVVALALISVLFLLAVILAVA. Residues 709–923 lie on the Cytoplasmic side of the membrane; that stretch reads LRLRRSSSPA…KKKSGKKEKK (215 aa). Disordered stretches follow at residues 794-832 and 893-923; these read TSHP…WPNN and ATLT…KEKK. Polar residues predominate over residues 807-832; it reads WRFSQAQRPGTSGSQNGDDTGTWPNN. The span at 913-923 shows a compositional bias: basic residues; sequence NKKKSGKKEKK.

The protein resides in the cell membrane. In terms of biological role, potential calcium-dependent cell-adhesion protein. May be involved in the establishment and maintenance of specific neuronal connections in the brain. The protein is Protocadherin gamma-B5 (PCDHGB5) of Homo sapiens (Human).